We begin with the raw amino-acid sequence, 216 residues long: Uracil phosphoribosyltransferase (216 aa).

30–34 (KNLVR) contributes to the GTP binding site. Residues R80, R105, and 140 to 148 (DPMIATAST) each bind 5-phospho-alpha-D-ribose 1-diphosphate. Uracil contacts are provided by residues I203 and 208–210 (GDA). Residue D209 participates in 5-phospho-alpha-D-ribose 1-diphosphate binding.

This sequence belongs to the UPRTase family. Mg(2+) serves as cofactor.

The enzyme catalyses UMP + diphosphate = 5-phospho-alpha-D-ribose 1-diphosphate + uracil. It functions in the pathway pyrimidine metabolism; UMP biosynthesis via salvage pathway; UMP from uracil: step 1/1. With respect to regulation, allosterically activated by GTP. Functionally, catalyzes the conversion of uracil and 5-phospho-alpha-D-ribose 1-diphosphate (PRPP) to UMP and diphosphate. The chain is Uracil phosphoribosyltransferase from Saccharolobus islandicus (strain M.16.4 / Kamchatka #3) (Sulfolobus islandicus).